Reading from the N-terminus, the 440-residue chain is Signal recognition particle 54 kDa protein (440 aa).

GTP contacts are provided by residues 104 to 111 (GLQGSGKT), 184 to 188 (DTAGR), and 242 to 245 (TKLD).

It belongs to the GTP-binding SRP family. SRP54 subfamily. As to quaternary structure, part of the signal recognition particle protein translocation system, which is composed of SRP and FtsY. Archaeal SRP consists of a 7S RNA molecule of 300 nucleotides and two protein subunits: SRP54 and SRP19.

It is found in the cytoplasm. The catalysed reaction is GTP + H2O = GDP + phosphate + H(+). Involved in targeting and insertion of nascent membrane proteins into the cytoplasmic membrane. Binds to the hydrophobic signal sequence of the ribosome-nascent chain (RNC) as it emerges from the ribosomes. The SRP-RNC complex is then targeted to the cytoplasmic membrane where it interacts with the SRP receptor FtsY. This is Signal recognition particle 54 kDa protein from Methanosarcina acetivorans (strain ATCC 35395 / DSM 2834 / JCM 12185 / C2A).